The following is a 272-amino-acid chain: uncharacterized protein (272 aa).

K185 serves as the catalytic Schiff-base intermediate with substrate.

It belongs to the DeoC/FbaB aldolase family.

This is an uncharacterized protein from Saccharolobus solfataricus (strain ATCC 35092 / DSM 1617 / JCM 11322 / P2) (Sulfolobus solfataricus).